A 547-amino-acid polypeptide reads, in one-letter code: Phosphomethylpyrimidine synthase (547 aa).

Substrate-binding positions include Asn150, Met179, Tyr208, His244, 264–266 (SRG), 305–308 (DGLR), and Glu344. His348 is a binding site for Zn(2+). A substrate-binding site is contributed by Tyr371. Position 412 (His412) interacts with Zn(2+). [4Fe-4S] cluster-binding residues include Cys492, Cys495, and Cys500.

The protein belongs to the ThiC family. [4Fe-4S] cluster is required as a cofactor.

It catalyses the reaction 5-amino-1-(5-phospho-beta-D-ribosyl)imidazole + S-adenosyl-L-methionine = 4-amino-2-methyl-5-(phosphooxymethyl)pyrimidine + CO + 5'-deoxyadenosine + formate + L-methionine + 3 H(+). Its pathway is cofactor biosynthesis; thiamine diphosphate biosynthesis. Catalyzes the synthesis of the hydroxymethylpyrimidine phosphate (HMP-P) moiety of thiamine from aminoimidazole ribotide (AIR) in a radical S-adenosyl-L-methionine (SAM)-dependent reaction. In Nocardia farcinica (strain IFM 10152), this protein is Phosphomethylpyrimidine synthase.